A 211-amino-acid polypeptide reads, in one-letter code: Large ribosomal subunit protein bL25 (211 aa).

The tract at residues 188 to 211 is disordered; sequence HREEEKAPEETGEAAPAPTPETGQ. The segment covering 200–211 has biased composition (low complexity); it reads EAAPAPTPETGQ.

It belongs to the bacterial ribosomal protein bL25 family. CTC subfamily. In terms of assembly, part of the 50S ribosomal subunit; part of the 5S rRNA/L5/L18/L25 subcomplex. Contacts the 5S rRNA. Binds to the 5S rRNA independently of L5 and L18.

In terms of biological role, this is one of the proteins that binds to the 5S RNA in the ribosome where it forms part of the central protuberance. This is Large ribosomal subunit protein bL25 from Desulforudis audaxviator (strain MP104C).